We begin with the raw amino-acid sequence, 233 residues long: Purine nucleoside phosphorylase DeoD-type (233 aa).

His-4 serves as a coordination point for a purine D-ribonucleoside. Phosphate is bound by residues Gly-20, Arg-24, Arg-43, and 87–90 (RIGT). A purine D-ribonucleoside-binding positions include 179–181 (EME) and 203–204 (SD). The active-site Proton donor is Asp-204.

Belongs to the PNP/UDP phosphorylase family. In terms of assembly, homohexamer; trimer of homodimers.

The enzyme catalyses a purine D-ribonucleoside + phosphate = a purine nucleobase + alpha-D-ribose 1-phosphate. It carries out the reaction a purine 2'-deoxy-D-ribonucleoside + phosphate = a purine nucleobase + 2-deoxy-alpha-D-ribose 1-phosphate. Catalyzes the reversible phosphorolytic breakdown of the N-glycosidic bond in the beta-(deoxy)ribonucleoside molecules, with the formation of the corresponding free purine bases and pentose-1-phosphate. The sequence is that of Purine nucleoside phosphorylase DeoD-type from Thermoanaerobacter pseudethanolicus (strain ATCC 33223 / 39E) (Clostridium thermohydrosulfuricum).